Consider the following 212-residue polypeptide: MTEILTSDDMRSLERAAIASGRASGLELMERAGAAVVEAIAEAWPDIRPPAVALRHAMILCGPGNNGGDGFVVARLLRRRGWKVTLYLYGEADRLPPDARANHDRWRRIGTIAPLPAAPDFSSADLVVDALFGLGLTRPLTGFGPIFAALASAGRPVLAIDLPSGRDADARADAAGWPSAPCSLAVTFHREKPAHAQLRAEGIGVIVKPIGL.

The YjeF N-terminal domain maps to 10–212 (MRSLERAAIA…IGVIVKPIGL (203 aa)). 65–69 (NNGGD) provides a ligand contact to (6S)-NADPHX. K(+) contacts are provided by Asn66 and Asp129. Residues 133 to 139 (GLGLTRP) and Asp161 each bind (6S)-NADPHX. Ser164 contributes to the K(+) binding site.

This sequence belongs to the NnrE/AIBP family. The cofactor is K(+).

It catalyses the reaction (6R)-NADHX = (6S)-NADHX. The catalysed reaction is (6R)-NADPHX = (6S)-NADPHX. Functionally, catalyzes the epimerization of the S- and R-forms of NAD(P)HX, a damaged form of NAD(P)H that is a result of enzymatic or heat-dependent hydration. This is a prerequisite for the S-specific NAD(P)H-hydrate dehydratase to allow the repair of both epimers of NAD(P)HX. In Rhodobacter capsulatus (strain ATCC BAA-309 / NBRC 16581 / SB1003), this protein is NAD(P)H-hydrate epimerase.